Here is a 426-residue protein sequence, read N- to C-terminus: Glutamyl-tRNA reductase (426 aa).

Substrate contacts are provided by residues 52–55, Ser-110, 115–117, and Gln-121; these read TCNR and EYE. Cys-53 serves as the catalytic Nucleophile. 190 to 195 provides a ligand contact to NADP(+); the sequence is GAGEMG.

This sequence belongs to the glutamyl-tRNA reductase family. Homodimer.

The catalysed reaction is (S)-4-amino-5-oxopentanoate + tRNA(Glu) + NADP(+) = L-glutamyl-tRNA(Glu) + NADPH + H(+). The protein operates within porphyrin-containing compound metabolism; protoporphyrin-IX biosynthesis; 5-aminolevulinate from L-glutamyl-tRNA(Glu): step 1/2. Its function is as follows. Catalyzes the NADPH-dependent reduction of glutamyl-tRNA(Glu) to glutamate 1-semialdehyde (GSA). This is Glutamyl-tRNA reductase from Saccharolobus islandicus (strain Y.N.15.51 / Yellowstone #2) (Sulfolobus islandicus).